Consider the following 1089-residue polypeptide: Carbamoyl phosphate synthase large chain (1089 aa).

Residues 1 to 399 (MPKRTDIKSI…SIQKALCSLE (399 aa)) are carboxyphosphate synthetic domain. Residues Arg-127, Arg-167, Gly-173, Gly-174, Glu-206, Leu-208, Glu-213, Gly-239, Val-240, His-241, Gln-283, and Glu-297 each contribute to the ATP site. An ATP-grasp 1 domain is found at 131–326 (KECMKKIGMD…IAKVATLLAV (196 aa)). Mg(2+) contacts are provided by Gln-283, Glu-297, and Asn-299. Positions 283, 297, and 299 each coordinate Mn(2+). The oligomerization domain stretch occupies residues 400–553 (RSLSGFDRVK…NVSELTQSKN (154 aa)). The interval 554 to 951 (DAKDKKEKKV…SYAKSQIASF (398 aa)) is carbamoyl phosphate synthetic domain. An ATP-grasp 2 domain is found at 680-871 (AEFITKLGIN…LAKVATRVMW (192 aa)). Arg-716, Gln-755, Leu-757, Glu-762, Gly-787, Ile-788, His-789, Ser-790, Gln-830, and Glu-842 together coordinate ATP. Mg(2+) is bound by residues Gln-830, Glu-842, and Asn-844. Mn(2+)-binding residues include Gln-830, Glu-842, and Asn-844. Positions 952–1089 (NHLPEQGVVF…VKSLQEWLKS (138 aa)) constitute an MGS-like domain. The segment at 952–1089 (NHLPEQGVVF…VKSLQEWLKS (138 aa)) is allosteric domain.

Belongs to the CarB family. As to quaternary structure, composed of two chains; the small (or glutamine) chain promotes the hydrolysis of glutamine to ammonia, which is used by the large (or ammonia) chain to synthesize carbamoyl phosphate. Tetramer of heterodimers (alpha,beta)4. Mg(2+) serves as cofactor. The cofactor is Mn(2+).

It carries out the reaction hydrogencarbonate + L-glutamine + 2 ATP + H2O = carbamoyl phosphate + L-glutamate + 2 ADP + phosphate + 2 H(+). The enzyme catalyses hydrogencarbonate + NH4(+) + 2 ATP = carbamoyl phosphate + 2 ADP + phosphate + 2 H(+). It participates in amino-acid biosynthesis; L-arginine biosynthesis; carbamoyl phosphate from bicarbonate: step 1/1. It functions in the pathway pyrimidine metabolism; UMP biosynthesis via de novo pathway; (S)-dihydroorotate from bicarbonate: step 1/3. In terms of biological role, large subunit of the glutamine-dependent carbamoyl phosphate synthetase (CPSase). CPSase catalyzes the formation of carbamoyl phosphate from the ammonia moiety of glutamine, carbonate, and phosphate donated by ATP, constituting the first step of 2 biosynthetic pathways, one leading to arginine and/or urea and the other to pyrimidine nucleotides. The large subunit (synthetase) binds the substrates ammonia (free or transferred from glutamine from the small subunit), hydrogencarbonate and ATP and carries out an ATP-coupled ligase reaction, activating hydrogencarbonate by forming carboxy phosphate which reacts with ammonia to form carbamoyl phosphate. This chain is Carbamoyl phosphate synthase large chain, found in Campylobacter jejuni subsp. jejuni serotype O:2 (strain ATCC 700819 / NCTC 11168).